Consider the following 150-residue polypeptide: uncharacterized protein (150 aa).

A Flavodoxin-like domain is found at 4–148 (LILYKSIHHK…KAKEFAKSIL (145 aa)).

This is an uncharacterized protein from Methanocaldococcus jannaschii (strain ATCC 43067 / DSM 2661 / JAL-1 / JCM 10045 / NBRC 100440) (Methanococcus jannaschii).